Consider the following 176-residue polypeptide: Dual-action ribosomal maturation protein DarP (176 aa).

The protein belongs to the DarP family.

It is found in the cytoplasm. Member of a network of 50S ribosomal subunit biogenesis factors which assembles along the 30S-50S interface, preventing incorrect 23S rRNA structures from forming. Promotes peptidyl transferase center (PTC) maturation. The chain is Dual-action ribosomal maturation protein DarP from Haemophilus ducreyi (strain 35000HP / ATCC 700724).